Reading from the N-terminus, the 1021-residue chain is Contactin-1 (1021 aa).

The N-terminal stretch at 1–20 (MKTPLLVSHLLLISLTSCLG) is a signal peptide. Ig-like C2-type domains follow at residues 41–131 (PIFE…ATLS), 137–223 (PFPP…KSVF), 241–326 (PADI…ARIY), 331–407 (PEWV…AELK), 413–500 (PTFE…GTLV), and 504–603 (PTRI…LVVR). 2 disulfide bridges follow: Cys65–Cys114 and Cys158–Cys211. Residues Asn208 and Asn258 are each glycosylated (N-linked (GlcNAc...) asparagine). An intrachain disulfide couples Cys263 to Cys310. Asn338 is a glycosylation site (N-linked (GlcNAc...) asparagine). 2 disulfides stabilise this stretch: Cys352-Cys391 and Cys436-Cys484. N-linked (GlcNAc...) asparagine glycans are attached at residues Asn457, Asn473, Asn494, and Asn521. Cysteines 526 and 585 form a disulfide. A glycan (N-linked (GlcNAc...) asparagine) is linked at Asn593. 4 consecutive Fibronectin type-III domains span residues 608–706 (PPGG…TDGA), 711–808 (APSD…SAQD), 813–908 (APTE…APPS), and 909–1002 (QPPR…TLSS). A disordered region spans residues 695-719 (SIPSNRIKTDGAAPNVAPSDVGGGG). An N-linked (GlcNAc...) asparagine glycan is attached at Asn935. A lipid anchor (GPI-anchor amidated serine) is attached at Ser1001. A propeptide spans 1002–1021 (SGLLSLLLPSLGFLVFYSEF) (removed in mature form).

The protein belongs to the immunoglobulin superfamily. Contactin family. Monomer. Interacts with NOTCH1. Interacts with CNTNAP1 in cis form and TNR. Binds to the carbonic-anhydrase like domain of PTPRZ1. Detected in a complex with NRCAM and PTPRB. Interacts with TASOR. Expressed by neurons, oligodendrocytes and their progenitors (at protein level). Myelination regulates the expression being down-regulated when neurons are in contact with Schwann cells.

It is found in the cell membrane. In terms of biological role, contactins mediate cell surface interactions during nervous system development. Involved in the formation of paranodal axo-glial junctions in myelinated peripheral nerves and in the signaling between axons and myelinating glial cells via its association with CNTNAP1. Participates in oligodendrocytes generation by acting as a ligand of NOTCH1. Its association with NOTCH1 promotes NOTCH1 activation through the released notch intracellular domain (NICD) and subsequent translocation to the nucleus. Interaction with TNR induces a repulsion of neurons and an inhibition of neurite outgrowth. The chain is Contactin-1 (Cntn1) from Rattus norvegicus (Rat).